A 64-amino-acid polypeptide reads, in one-letter code: Large ribosomal subunit protein uL29 (64 aa).

The protein belongs to the universal ribosomal protein uL29 family.

In Methanothermobacter thermautotrophicus (strain ATCC 29096 / DSM 1053 / JCM 10044 / NBRC 100330 / Delta H) (Methanobacterium thermoautotrophicum), this protein is Large ribosomal subunit protein uL29 (rpl29).